The chain runs to 616 residues: UPF0329 protein ECU02_1540 (616 aa).

2 stretches are compositionally biased toward basic and acidic residues: residues 350–359 (EREKREESKG) and 369–381 (GAGEAKEESKEED). The interval 350-427 (EREKREESKG…RKGDGHHYKI (78 aa)) is disordered. Positions 382–396 (GKEEEGVEAEEEESA) are enriched in acidic residues. Residues 408 to 427 (ARRKKSLKGKRKGDGHHYKI) are compositionally biased toward basic residues.

This sequence belongs to the UPF0329 family.

The protein is UPF0329 protein ECU02_1540 of Encephalitozoon cuniculi (strain GB-M1) (Microsporidian parasite).